The primary structure comprises 139 residues: uncharacterized protein (139 aa).

It to S.typhimurium FliF.

Its function is as follows. May be involved in the assembly, structure, or function of the flagellum. May polymerize to form a filamentous structure that is part of the flagellum. This is an uncharacterized protein from Bacillus subtilis (strain 168).